The chain runs to 563 residues: MSYQALYRVFRPQRFEDVVGQEHITKTLQNALLQKKFSHAYLFSGPRGTGKTSAAKIFAKAVNCEHAPVDEPCNECAACKGITNGSISDVIEIDAASNNGVDEIRDIRDKVKFAPSAVTYKVYIIDEVHMLSIGAFNALLKTLEEPPEHCIFILATTEPHKIPLTIISRCQRFDFKRITSQAIVGRMNKIVDAEQLQVEEGSLEIIASAADGGMRDALSLLDQAISFSGDILKVEDALLITGAVSQLYIGKLAKSLHDKNVSDALETLNELLQQGKDPAKLIEDMIFYFRDMLLYKTAPGLEGVLEKVKVDETFRELSEQIPAQALYEMIDILNKSHQEMKWTNHPRIFFEVAVVKICQTSHQSAADLPEVDMLMKKIQQLEQEVERLKTTGIKAAAESPKKEAPRVPKGGKSNYKAPVGRIHEILKEATRPDLDLLRNSWGKLLAHLKQQNKVSHAALLNDSEPVAAGSAAFVLKFKYEIHCKMVAEDNNGVRTNLEQILESMLGKRMDLIGVPEAQWGKIREEFLEDHQQENEGSNEPAEEDPLIAEAKKLVGADLIEIKD.

An ATP-binding site is contributed by 45–52 (GPRGTGKT). Zn(2+) is bound by residues cysteine 64, cysteine 73, cysteine 76, and cysteine 79.

Belongs to the DnaX/STICHEL family. As to quaternary structure, component of the DNA clamp loading complex consisting of tau(3):delta(1):delta'(1). The DNA polymerase III holoenzyme complex contains at least 10 different subunits organized into 3 functionally essential subassemblies: the Pol III core, the beta sliding clamp processivity factor and the clamp-loading complex. The Pol III core (subunits alpha, epsilon and theta) contains the polymerase and the 3'-5' exonuclease proofreading activities. The polymerase is tethered to the template via the dimeric beta sliding clamp processivity factor. The DNA clamp-loading complex assembles the beta sliding clamp onto the primed template and plays a central role in the organization and communication at the replication fork. Forms a complex with replicative DNA helicase DnaB (shown with G.stearothermophilus DnaB) tau(3):DnaB(6); a single ATP hydrolysis even is sufficient for complex formation. Colocalizes with DNA helicases PriA, RecQ and RecS.

It localises to the cytoplasm. It is found in the nucleoid. It carries out the reaction DNA(n) + a 2'-deoxyribonucleoside 5'-triphosphate = DNA(n+1) + diphosphate. Functionally, part of the beta sliding clamp loading complex, which hydrolyzes ATP to load the beta clamp onto primed DNA to form the DNA replication pre-initiation complex. DNA polymerase III is a complex, multichain enzyme responsible for most of the replicative DNA synthesis in bacteria. This chain is DNA polymerase III subunit tau, found in Bacillus subtilis (strain 168).